We begin with the raw amino-acid sequence, 56 residues long: uncharacterized protein (56 aa).

This is an uncharacterized protein from Acidianus convivator (ABV).